Consider the following 188-residue polypeptide: Elongation factor P (188 aa).

It belongs to the elongation factor P family.

It localises to the cytoplasm. Its pathway is protein biosynthesis; polypeptide chain elongation. Its function is as follows. Involved in peptide bond synthesis. Stimulates efficient translation and peptide-bond synthesis on native or reconstituted 70S ribosomes in vitro. Probably functions indirectly by altering the affinity of the ribosome for aminoacyl-tRNA, thus increasing their reactivity as acceptors for peptidyl transferase. This chain is Elongation factor P, found in Saccharopolyspora erythraea (strain ATCC 11635 / DSM 40517 / JCM 4748 / NBRC 13426 / NCIMB 8594 / NRRL 2338).